A 350-amino-acid polypeptide reads, in one-letter code: Biotin synthase (350 aa).

The Radical SAM core domain maps to Arg-54–Ser-278. Positions 69, 73, and 76 each coordinate [4Fe-4S] cluster. Residues Cys-113, Cys-144, Cys-204, and Arg-276 each coordinate [2Fe-2S] cluster.

Belongs to the radical SAM superfamily. Biotin synthase family. As to quaternary structure, homodimer. It depends on [4Fe-4S] cluster as a cofactor. Requires [2Fe-2S] cluster as cofactor.

It carries out the reaction (4R,5S)-dethiobiotin + (sulfur carrier)-SH + 2 reduced [2Fe-2S]-[ferredoxin] + 2 S-adenosyl-L-methionine = (sulfur carrier)-H + biotin + 2 5'-deoxyadenosine + 2 L-methionine + 2 oxidized [2Fe-2S]-[ferredoxin]. It participates in cofactor biosynthesis; biotin biosynthesis; biotin from 7,8-diaminononanoate: step 2/2. Catalyzes the conversion of dethiobiotin (DTB) to biotin by the insertion of a sulfur atom into dethiobiotin via a radical-based mechanism. The chain is Biotin synthase from Neisseria gonorrhoeae (strain ATCC 700825 / FA 1090).